Here is a 333-residue protein sequence, read N- to C-terminus: Ribosomal RNA small subunit methyltransferase H (333 aa).

Residues 36–38, Asp-54, Phe-81, Asp-102, and Gln-109 contribute to the S-adenosyl-L-methionine site; that span reads GGY.

Belongs to the methyltransferase superfamily. RsmH family.

It localises to the cytoplasm. It catalyses the reaction cytidine(1402) in 16S rRNA + S-adenosyl-L-methionine = N(4)-methylcytidine(1402) in 16S rRNA + S-adenosyl-L-homocysteine + H(+). Its function is as follows. Specifically methylates the N4 position of cytidine in position 1402 (C1402) of 16S rRNA. In Afipia carboxidovorans (strain ATCC 49405 / DSM 1227 / KCTC 32145 / OM5) (Oligotropha carboxidovorans), this protein is Ribosomal RNA small subunit methyltransferase H.